The primary structure comprises 203 residues: CCG-binding protein 1 (203 aa).

A disordered region spans residues 156–178 (IPDGLPKSEQELEEEEKSKMPDS). A compositionally biased stretch (basic and acidic residues) spans 161-175 (PKSEQELEEEEKSKM).

As to quaternary structure, homotetramer. Interacts with MEE12/CCG, MED7A, MED7B, MED9, AGL49, AGL53, AGL75, AGL80, AGL81, AGL82, AGL103 and NRPB1 (via CTD). Expressed in roots, leaves, stems and flowers. Expressed in the central cell of mature ovules.

The protein resides in the nucleus. The protein localises to the cytoplasm. Required for the development of the one-cell zygote and endosperm in embryos. Required for micropylar pollen tube guidance, but has no effect on ovule development and gametophytic cell fate specification. May connect transcription factors and the Pol II machinery to regulate pollen tube attraction, via its interactions with AGAMOUS-like (AGL) transcription factors, MEE14/CCG and the Mediator complex. The sequence is that of CCG-binding protein 1 from Arabidopsis thaliana (Mouse-ear cress).